Reading from the N-terminus, the 435-residue chain is Islet cell autoantigen 1-like protein (435 aa).

An AH domain is found at 44–247; the sequence is ASDAELDAKL…TAQMMSQIQE (204 aa). Residues 391–435 are disordered; that stretch reads WASQEGSEHSDTLPVPSQHPKKLKYLGPLSNPDAIGHSDDELLNA. Basic and acidic residues predominate over residues 426-435; it reads GHSDDELLNA.

The sequence is that of Islet cell autoantigen 1-like protein (Ica1l) from Rattus norvegicus (Rat).